A 191-amino-acid polypeptide reads, in one-letter code: Flavin prenyltransferase UbiX (191 aa).

Residues 13–15, Thr39, 90–93, and Arg125 each bind FMN; these read GAS and TMKT. Positions 155 and 171 each coordinate dimethylallyl phosphate.

Belongs to the UbiX/PAD1 family.

The catalysed reaction is dimethylallyl phosphate + FMNH2 = prenylated FMNH2 + phosphate. In terms of biological role, flavin prenyltransferase that catalyzes the synthesis of the prenylated FMN cofactor (prenyl-FMN) for 4-hydroxy-3-polyprenylbenzoic acid decarboxylase UbiD. The prenyltransferase is metal-independent and links a dimethylallyl moiety from dimethylallyl monophosphate (DMAP) to the flavin N5 and C6 atoms of FMN. The sequence is that of Flavin prenyltransferase UbiX from Methanothermobacter thermautotrophicus (strain ATCC 29096 / DSM 1053 / JCM 10044 / NBRC 100330 / Delta H) (Methanobacterium thermoautotrophicum).